Consider the following 171-residue polypeptide: Adenine phosphoribosyltransferase (171 aa).

It belongs to the purine/pyrimidine phosphoribosyltransferase family. Homodimer.

The protein resides in the cytoplasm. It catalyses the reaction AMP + diphosphate = 5-phospho-alpha-D-ribose 1-diphosphate + adenine. Its pathway is purine metabolism; AMP biosynthesis via salvage pathway; AMP from adenine: step 1/1. In terms of biological role, catalyzes a salvage reaction resulting in the formation of AMP, that is energically less costly than de novo synthesis. This chain is Adenine phosphoribosyltransferase, found in Syntrophotalea carbinolica (strain DSM 2380 / NBRC 103641 / GraBd1) (Pelobacter carbinolicus).